Reading from the N-terminus, the 333-residue chain is L-lactate dehydrogenase B chain (333 aa).

Residues 29–57 and Arg99 each bind NAD(+); that span reads GQVGMACAVSILGKGLCDELALVDVLEDK. Substrate-binding residues include Arg106, Asn138, and Arg169. Asn138 serves as a coordination point for NAD(+). His193 (proton acceptor) is an active-site residue. Substrate is bound at residue Thr248.

It belongs to the LDH/MDH superfamily. LDH family. In terms of assembly, homotetramer.

It is found in the cytoplasm. The catalysed reaction is (S)-lactate + NAD(+) = pyruvate + NADH + H(+). Its pathway is fermentation; pyruvate fermentation to lactate; (S)-lactate from pyruvate: step 1/1. Its function is as follows. Interconverts simultaneously and stereospecifically pyruvate and lactate with concomitant interconversion of NADH and NAD(+). This chain is L-lactate dehydrogenase B chain (LDHB), found in Anas platyrhynchos (Mallard).